Consider the following 116-residue polypeptide: Large ribosomal subunit protein bL20 (116 aa).

It belongs to the bacterial ribosomal protein bL20 family.

Its function is as follows. Binds directly to 23S ribosomal RNA and is necessary for the in vitro assembly process of the 50S ribosomal subunit. It is not involved in the protein synthesizing functions of that subunit. The chain is Large ribosomal subunit protein bL20 from Phocaeicola vulgatus (strain ATCC 8482 / DSM 1447 / JCM 5826 / CCUG 4940 / NBRC 14291 / NCTC 11154) (Bacteroides vulgatus).